The sequence spans 213 residues: Cytochrome c biogenesis ATP-binding export protein CcmA (213 aa).

The ABC transporter domain occupies 3–211 (LTAENLGVRR…QMTGFAGVET (209 aa)). Residue 35 to 42 (GRNGSGKS) participates in ATP binding.

The protein belongs to the ABC transporter superfamily. CcmA exporter (TC 3.A.1.107) family. The complex is composed of two ATP-binding proteins (CcmA) and two transmembrane proteins (CcmB).

Its subcellular location is the cell inner membrane. The catalysed reaction is heme b(in) + ATP + H2O = heme b(out) + ADP + phosphate + H(+). Functionally, part of the ABC transporter complex CcmAB involved in the biogenesis of c-type cytochromes; once thought to export heme, this seems not to be the case, but its exact role is uncertain. Responsible for energy coupling to the transport system. This is Cytochrome c biogenesis ATP-binding export protein CcmA from Agrobacterium fabrum (strain C58 / ATCC 33970) (Agrobacterium tumefaciens (strain C58)).